We begin with the raw amino-acid sequence, 215 residues long: Pyrrolidone-carboxylate peptidase (215 aa).

Catalysis depends on residues Glu-80, Cys-143, and His-167.

This sequence belongs to the peptidase C15 family. Homotetramer.

It localises to the cytoplasm. The catalysed reaction is Release of an N-terminal pyroglutamyl group from a polypeptide, the second amino acid generally not being Pro.. Functionally, removes 5-oxoproline from various penultimate amino acid residues except L-proline. The sequence is that of Pyrrolidone-carboxylate peptidase from Yersinia pseudotuberculosis serotype O:3 (strain YPIII).